A 564-amino-acid chain; its full sequence is Mercuric reductase (564 aa).

Residues 1-65 (MSTLKITGMT…AVAGLGYRAT (65 aa)) form the HMA domain. 2 residues coordinate a metal cation: C11 and C14. 3 residues coordinate FAD: A109, G129, and T134. A disulfide bridge links C135 with C140. Positions 144, 210, 406, and 414 each coordinate FAD. C561 and C562 together coordinate Hg(2+).

It belongs to the class-I pyridine nucleotide-disulfide oxidoreductase family. Homodimer. It depends on FAD as a cofactor.

The enzyme catalyses Hg + NADP(+) + H(+) = Hg(2+) + NADPH. Functionally, resistance to Hg(2+) in bacteria appears to be governed by a specialized system which includes mercuric reductase. MerA protein is responsible for volatilizing mercury as Hg(0). This is Mercuric reductase (merA) from Shigella flexneri.